The primary structure comprises 100 residues: Small ribosomal subunit protein uS14 (100 aa).

The protein belongs to the universal ribosomal protein uS14 family. Part of the 30S ribosomal subunit. Contacts proteins S3 and S10.

Its function is as follows. Binds 16S rRNA, required for the assembly of 30S particles and may also be responsible for determining the conformation of the 16S rRNA at the A site. This chain is Small ribosomal subunit protein uS14, found in Synechococcus sp. (strain CC9902).